Consider the following 633-residue polypeptide: Threonine--tRNA ligase (633 aa).

The TGS domain maps to methionine 1 to threonine 61. A catalytic region spans residues aspartate 242 to proline 533. Residues cysteine 333, histidine 384, and histidine 510 each coordinate Zn(2+).

This sequence belongs to the class-II aminoacyl-tRNA synthetase family. As to quaternary structure, homodimer. Zn(2+) is required as a cofactor.

It localises to the cytoplasm. It catalyses the reaction tRNA(Thr) + L-threonine + ATP = L-threonyl-tRNA(Thr) + AMP + diphosphate + H(+). Catalyzes the attachment of threonine to tRNA(Thr) in a two-step reaction: L-threonine is first activated by ATP to form Thr-AMP and then transferred to the acceptor end of tRNA(Thr). Also edits incorrectly charged L-seryl-tRNA(Thr). This chain is Threonine--tRNA ligase, found in Ehrlichia ruminantium (strain Welgevonden).